The following is a 399-amino-acid chain: Odorant receptor 42b (399 aa).

The Cytoplasmic portion of the chain corresponds to 1–45 (MVFELIRPAPLTEQKRSRDGCIYLYRAMKFIGWLPPKQGVLRYVY). The helical transmembrane segment at 46–66 (LTWTLMTFVWCTTYLPLGFLG) threads the bilayer. At 67-83 (SYMTQIKSFSPGEFLTS) the chain is on the extracellular side. The chain crosses the membrane as a helical span at residues 84 to 104 (LQVCINAYGSSVKVAITYSML). Residues 105–140 (WRLIKAKNILDQLDLRCTAMEEREKIHLVVARSNHA) are Cytoplasmic-facing. A helical transmembrane segment spans residues 141-161 (FLIFTFVYCGYAGSTYLSSVL). Topologically, residues 162–178 (SGRPPWQLYNPFIDWHD) are extracellular. Residues 179-199 (GTLKLWVASTLEYMVMSGAVL) form a helical membrane-spanning segment. Topologically, residues 200–268 (QDQLSDSYPL…AIIKPVIQGT (69 aa)) are cytoplasmic. Residues 269 to 289 (IFTQFLLIGLVLGFTLINVFF) form a helical membrane-spanning segment. At 290-292 (FSD) the chain is on the extracellular side. A helical membrane pass occupies residues 293 to 313 (IWTGIASFMFVITILLQTFPF). At 314–356 (CYTCNLIMEDCESLTHAIFQSNWVDASRRYKTTLLYFLQNVQQ) the chain is on the cytoplasmic side. A helical transmembrane segment spans residues 357-377 (PIVFIAGGIFQISMSSNISVA). At 378-399 (KFAFSVITITKQMNIADKFKTD) the chain is on the extracellular side.

Belongs to the insect chemoreceptor superfamily. Heteromeric odorant receptor channel (TC 1.A.69) family. Or2a subfamily. As to quaternary structure, interacts with Orco. Complexes exist early in the endomembrane system in olfactory sensory neurons (OSNs), coupling these complexes to the conserved ciliary trafficking pathway. Expressed in olfactory sensory neurons in the antenna.

It is found in the cell membrane. Odorant receptor which mediates acceptance or avoidance behavior, depending on its substrates. The odorant receptor repertoire encodes a large collection of odor stimuli that vary widely in identity, intensity, and duration. May form a complex with Orco to form odorant-sensing units, providing sensitive and prolonged odorant signaling and calcium permeability. Involved in the behavioral responses to ethyl acetate and pentyl acetate. In Drosophila melanogaster (Fruit fly), this protein is Odorant receptor 42b (Or42b).